The chain runs to 198 residues: Inner membrane-spanning protein YciB (198 aa).

Transmembrane regions (helical) follow at residues 36-56 (IYSA…AIFI), 67-87 (LTLV…SETF), 90-110 (WKAP…HFIG), 135-155 (VAWI…AFTF), and 162-182 (FKVF…GIYL).

It belongs to the YciB family.

The protein resides in the cell inner membrane. Its function is as follows. Plays a role in cell envelope biogenesis, maintenance of cell envelope integrity and membrane homeostasis. This chain is Inner membrane-spanning protein YciB, found in Pseudomonas fluorescens (strain SBW25).